The primary structure comprises 522 residues: Peptide chain release factor 3 (522 aa).

The tr-type G domain maps to 9-276 (KKRRTFAIIS…SFVNLAPAPQ (268 aa)). GTP-binding positions include 18–25 (SHPDAGKT), 86–90 (DTPGH), and 140–143 (NKLD).

It belongs to the TRAFAC class translation factor GTPase superfamily. Classic translation factor GTPase family. PrfC subfamily.

Its subcellular location is the cytoplasm. Its function is as follows. Increases the formation of ribosomal termination complexes and stimulates activities of RF-1 and RF-2. It binds guanine nucleotides and has strong preference for UGA stop codons. It may interact directly with the ribosome. The stimulation of RF-1 and RF-2 is significantly reduced by GTP and GDP, but not by GMP. This Lactobacillus johnsonii (strain CNCM I-12250 / La1 / NCC 533) protein is Peptide chain release factor 3.